We begin with the raw amino-acid sequence, 312 residues long: Zinc finger protein-like 1 (312 aa).

The segment at 1-43 (MGLCKCPKRKVTNLFCFEHRVNVCEHCLVANHAKCIVQSYLQW) adopts a B box-type; degenerate zinc-finger fold. Over 1-268 (MGLCKCPKRK…RPLTLLQRAG (268 aa)) the chain is Cytoplasmic. The RING-type; degenerate zinc-finger motif lies at 53 to 101 (CRLCNIPLAARETTRLICYDLFHWACLNERAAQLPRNTAPAGYQCPSCS). The disordered stretch occupies residues 144-233 (EPEPLNTSEF…RAPGLHRDCD (90 aa)). A compositionally biased stretch (polar residues) spans 148-173 (LNTSEFSDWSSFNASGSPEQEETASA). A compositionally biased stretch (basic and acidic residues) spans 215-233 (KVYDTRDDERAPGLHRDCD). Residues 269-289 (LLLLLGLLGFLALLALMSRLG) traverse the membrane as a helical segment. The Lumenal portion of the chain corresponds to 290–312 (RAAADSDPNLDPLMNPHIRVGPS).

The protein belongs to the ZFPL1 family. As to quaternary structure, interacts with GOLGA2/GM130. In terms of processing, phosphorylated.

It localises to the golgi apparatus. The protein resides in the cis-Golgi network membrane. In terms of biological role, required for cis-Golgi integrity and efficient ER to Golgi transport. Involved in the maintenance of the integrity of the cis-Golgi, possibly via its interaction with GOLGA2/GM130. In Bos taurus (Bovine), this protein is Zinc finger protein-like 1 (ZFPL1).